The primary structure comprises 211 residues: Ceramide-1-phosphate transfer protein (211 aa).

An N-acylsphingoid base 1-phosphate is bound by residues Asp-53, Lys-57, Arg-103, Arg-107, and His-147.

Belongs to the GLTP family.

The protein localises to the cytoplasm. The protein resides in the cytosol. It is found in the golgi apparatus. It localises to the trans-Golgi network membrane. Its subcellular location is the cell membrane. The protein localises to the endosome membrane. The protein resides in the nucleus outer membrane. It catalyses the reaction N-(hexadecanoyl)-sphing-4-enine-1-phosphate(in) = N-(hexadecanoyl)-sphing-4-enine-1-phosphate(out). The catalysed reaction is N-(9Z-octadecenoyl)-sphing-4-enine-1-phosphate(in) = N-(9Z-octadecenoyl)-sphing-4-enine-1-phosphate(out). Mediates the intracellular transfer of ceramide-1-phosphate (C1P) between organelle membranes and the cell membrane. Required for normal structure of the Golgi stacks. Can bind phosphoceramides with a variety of aliphatic chains, but has a preference for lipids with saturated C16:0 or monounsaturated C18:1 aliphatic chains, and is inefficient with phosphoceramides containing lignoceryl (C24:0). Plays a role in the regulation of the cellular levels of ceramide-1-phosphate, and thereby contributes to the regulation of phospholipase PLA2G4A activity and the release of arachidonic acid. Has no activity with galactosylceramide, lactosylceramide, sphingomyelin, phosphatidylcholine, phosphatidic acid and ceramide. C1P transfer is stimulated by phosphatidylserine in C1P source vesicles. Regulates autophagy and pyroptosis, but not apoptosis. This is Ceramide-1-phosphate transfer protein (cptp) from Danio rerio (Zebrafish).